Reading from the N-terminus, the 202-residue chain is 3-isopropylmalate dehydratase small subunit (202 aa).

Belongs to the LeuD family. LeuD type 1 subfamily. Heterodimer of LeuC and LeuD.

It catalyses the reaction (2R,3S)-3-isopropylmalate = (2S)-2-isopropylmalate. Its pathway is amino-acid biosynthesis; L-leucine biosynthesis; L-leucine from 3-methyl-2-oxobutanoate: step 2/4. In terms of biological role, catalyzes the isomerization between 2-isopropylmalate and 3-isopropylmalate, via the formation of 2-isopropylmaleate. This is 3-isopropylmalate dehydratase small subunit from Nocardia farcinica (strain IFM 10152).